Reading from the N-terminus, the 662-residue chain is Bifunctional polymyxin resistance protein ArnA (662 aa).

The tract at residues 1 to 307 (MTSKAVVFAY…ELGLVEGARL (307 aa)) is formyltransferase ArnAFT. H106 functions as the Proton donor; for formyltransferase activity in the catalytic mechanism. (6R)-10-formyltetrahydrofolate is bound by residues R116 and 138 to 142 (VERAD). The segment at 316–662 (RRTRVLILGV…EALREREAQA (347 aa)) is dehydrogenase ArnADH. NAD(+) contacts are provided by residues D349 and 370 to 371 (DI). UDP-alpha-D-glucuronate contacts are provided by residues A395, Y400, and 434–435 (TS). E436 functions as the Proton acceptor; for decarboxylase activity in the catalytic mechanism. Residues R462, N493, 527-536 (RLVDGGAQKR), and Y614 each bind UDP-alpha-D-glucuronate. R620 (proton donor; for decarboxylase activity) is an active-site residue.

In the N-terminal section; belongs to the Fmt family. UDP-L-Ara4N formyltransferase subfamily. This sequence in the C-terminal section; belongs to the NAD(P)-dependent epimerase/dehydratase family. UDP-glucuronic acid decarboxylase subfamily. In terms of assembly, homohexamer, formed by a dimer of trimers.

The catalysed reaction is UDP-alpha-D-glucuronate + NAD(+) = UDP-beta-L-threo-pentopyranos-4-ulose + CO2 + NADH. The enzyme catalyses UDP-4-amino-4-deoxy-beta-L-arabinose + (6R)-10-formyltetrahydrofolate = UDP-4-deoxy-4-formamido-beta-L-arabinose + (6S)-5,6,7,8-tetrahydrofolate + H(+). The protein operates within nucleotide-sugar biosynthesis; UDP-4-deoxy-4-formamido-beta-L-arabinose biosynthesis; UDP-4-deoxy-4-formamido-beta-L-arabinose from UDP-alpha-D-glucuronate: step 1/3. It participates in nucleotide-sugar biosynthesis; UDP-4-deoxy-4-formamido-beta-L-arabinose biosynthesis; UDP-4-deoxy-4-formamido-beta-L-arabinose from UDP-alpha-D-glucuronate: step 3/3. Its pathway is bacterial outer membrane biogenesis; lipopolysaccharide biosynthesis. Its function is as follows. Bifunctional enzyme that catalyzes the oxidative decarboxylation of UDP-glucuronic acid (UDP-GlcUA) to UDP-4-keto-arabinose (UDP-Ara4O) and the addition of a formyl group to UDP-4-amino-4-deoxy-L-arabinose (UDP-L-Ara4N) to form UDP-L-4-formamido-arabinose (UDP-L-Ara4FN). The modified arabinose is attached to lipid A and is required for resistance to polymyxin and cationic antimicrobial peptides. The protein is Bifunctional polymyxin resistance protein ArnA of Pseudomonas paraeruginosa (strain DSM 24068 / PA7) (Pseudomonas aeruginosa (strain PA7)).